Consider the following 221-residue polypeptide: Octanoyltransferase (221 aa).

The BPL/LPL catalytic domain maps to 31–213 (DKSADEIWLV…HFVTILGYNK (183 aa)). Residues 70–77 (RGGQITYH), 142–144 (SLG), and 155–157 (GLA) contribute to the substrate site. Catalysis depends on Cys-173, which acts as the Acyl-thioester intermediate.

This sequence belongs to the LipB family.

The protein resides in the cytoplasm. The enzyme catalyses octanoyl-[ACP] + L-lysyl-[protein] = N(6)-octanoyl-L-lysyl-[protein] + holo-[ACP] + H(+). The protein operates within protein modification; protein lipoylation via endogenous pathway; protein N(6)-(lipoyl)lysine from octanoyl-[acyl-carrier-protein]: step 1/2. Its function is as follows. Catalyzes the transfer of endogenously produced octanoic acid from octanoyl-acyl-carrier-protein onto the lipoyl domains of lipoate-dependent enzymes. Lipoyl-ACP can also act as a substrate although octanoyl-ACP is likely to be the physiological substrate. This Mannheimia succiniciproducens (strain KCTC 0769BP / MBEL55E) protein is Octanoyltransferase.